The primary structure comprises 652 residues: MTRDIVIIGGGVIGLAIAVELKLRGAEVTVICRDFQAAAAHAAAGMLAPDAEQITDGAMKSLCWRSRSLYSEWTSKLEDLTGLNTGYWPCGILAPIYEGQESKGVRVQEGEGESPAYWLEKAAIHQYQPGLGEDVVGGWWYPEDAQVNNQALARVLWAAAESLGVELKDGITVEGLLQQQGQVVGVQTNTGIIRAEHYVLATGAWANELLPLPVTPRKGQMLRLRVPESVPELPLKRVLFGKNIYIVPRRERSIIVGATSEDVGFTPHNTPAGIQTLLQGAIRLYPQLQDYPIQEFWWGFRPATPDELPILGTSHCPNLTLATGHYRNGILLAPITAALIADLIVEQKSDPLLSHFHYSRSQKQASTIPMLTHSANFSNGHTKNPPLPTLDSPLIIAGKSFHSRLMTGTGKYRSIEEMQQSVVASGCEIVTVAVRRVQTKTPGHEGLAEALDWSKIWMLPNTAGCQTAEEAIRVARLGREMAKLLGQEDNNFVKLEVIPDPKYLLPDPIGTLQAAEQLVKEGFAVLPYINADPMLAKHLEDVGCATVMPLASPIGSGQGLKTTANIQIIIENAKIPVVVDAGIGAPSEASQAMELGADALLINSAIALAQNPAAMAQAMNLATVAGRLAYLAGRMPMKTYASASSPVTGTIS.

The thiO stretch occupies residues 1 to 366 (MTRDIVIIGG…HYSRSQKQAS (366 aa)). FAD contacts are provided by residues 5–19 (IVIIGGGVIGLAIAV) and 44–46 (AGM). Glutamate 52 provides a ligand contact to glycine. Valine 173 contacts FAD. Glycine-binding residues include arginine 301 and arginine 327. Residue 325–331 (HYRNGIL) participates in FAD binding. Residues 393–652 (PLIIAGKSFH…ASSPVTGTIS (260 aa)) form a thiG region. Lysine 494 serves as the catalytic Schiff-base intermediate with DXP. 1-deoxy-D-xylulose 5-phosphate is bound by residues glycine 555, 581–582 (AG), and 603–604 (NS).

The protein in the N-terminal section; belongs to the DAO family. ThiO subfamily. It in the C-terminal section; belongs to the ThiG family. Interacts with ThiH and ThiS. The cofactor is FAD.

It localises to the cytoplasm. The enzyme catalyses glycine + O2 + H2O = glyoxylate + H2O2 + NH4(+). The catalysed reaction is [ThiS sulfur-carrier protein]-C-terminal-Gly-aminoethanethioate + 2-iminoacetate + 1-deoxy-D-xylulose 5-phosphate = [ThiS sulfur-carrier protein]-C-terminal Gly-Gly + 2-[(2R,5Z)-2-carboxy-4-methylthiazol-5(2H)-ylidene]ethyl phosphate + 2 H2O + H(+). The protein operates within cofactor biosynthesis; thiamine diphosphate biosynthesis. In terms of biological role, catalyzes the FAD-dependent oxidative deamination of glycine. Is essential for thiamine biosynthesis since the oxidation of glycine catalyzed by ThiO generates the glycine imine intermediate (dehydroglycine) required for the biosynthesis of the thiazole ring of thiamine pyrophosphate. Catalyzes the rearrangement of 1-deoxy-D-xylulose 5-phosphate (DXP) to produce the thiazole phosphate moiety of thiamine. Sulfur is provided by the thiocarboxylate moiety of the carrier protein ThiS. In vitro, sulfur can be provided by H(2)S. The protein is Bifunctional protein ThiO/ThiG (thiO/thiG) of Nostoc sp. (strain PCC 7120 / SAG 25.82 / UTEX 2576).